Here is a 386-residue protein sequence, read N- to C-terminus: 2-deoxy-scyllo-inosose synthase (386 aa).

NAD(+)-binding positions include Asp-42, 73–76 (EEHK), 105–109 (GVTGN), 129–130 (TT), 140–142 (SLK), and 151–152 (KN). Lys-142 is an active-site residue. Glu-184 is a Co(2+) binding site. The active site involves Glu-244. Co(2+) is bound by residues His-247 and His-263.

It belongs to the sugar phosphate cyclases superfamily. DOI synthase family. NAD(+) serves as cofactor. Requires Co(2+) as cofactor.

It catalyses the reaction D-glucose 6-phosphate = 2-deoxy-L-scyllo-inosose + phosphate. It participates in metabolic intermediate biosynthesis; 2-deoxystreptamine biosynthesis; 2-deoxystreptamine from D-glucose 6-phosphate: step 1/4. Its pathway is antibiotic biosynthesis; tobramycin biosynthesis. Functionally, catalyzes the intramolecular carbocycle formation from D-glucose-6-phosphate to 2-deoxy-scyllo-inosose (DOI). This chain is 2-deoxy-scyllo-inosose synthase (tbmA), found in Streptoalloteichus tenebrarius (strain ATCC 17920 / DSM 40477 / JCM 4838 / CBS 697.72 / NBRC 16177 / NCIMB 11028 / NRRL B-12390 / A12253. 1 / ISP 5477) (Streptomyces tenebrarius).